The following is a 231-amino-acid chain: Large ribosomal subunit protein uL1 (231 aa).

This sequence belongs to the universal ribosomal protein uL1 family. In terms of assembly, part of the 50S ribosomal subunit.

In terms of biological role, binds directly to 23S rRNA. The L1 stalk is quite mobile in the ribosome, and is involved in E site tRNA release. Protein L1 is also a translational repressor protein, it controls the translation of the L11 operon by binding to its mRNA. The chain is Large ribosomal subunit protein uL1 from Pseudomonas savastanoi pv. phaseolicola (strain 1448A / Race 6) (Pseudomonas syringae pv. phaseolicola (strain 1448A / Race 6)).